Reading from the N-terminus, the 91-residue chain is DNA-binding protein HU (91 aa).

Belongs to the bacterial histone-like protein family.

In terms of biological role, histone-like DNA-binding protein which is capable of wrapping DNA to stabilize it, and thus to prevent its denaturation under extreme environmental conditions. Also seems to act as a fortuitous virulence factor in delayed sequelae by binding to heparan sulfate-proteoglycans in the extracellular matrix of target organs and acting as a nidus for in situ immune complex formation. The chain is DNA-binding protein HU (hup) from Streptococcus downei (Streptococcus sobrinus).